The sequence spans 315 residues: Secreted mono- and diacylglycerol lipase LIP2 (315 aa).

A signal peptide spans 1-21; sequence MACFRVILYLSVIFFVQCVFA. Residues Cys-68 and Cys-308 are joined by a disulfide bond. Asn-74 carries an N-linked (GlcNAc...) asparagine glycan. Residue Ser-182 is the Nucleophile of the active site. The active site involves Asp-240. N-linked (GlcNAc...) asparagine glycosylation is present at Asn-265. The active site involves His-292.

Belongs to the AB hydrolase superfamily. Lipase family. Class 3 subfamily.

Its subcellular location is the secreted. It catalyses the reaction a monoacylglycerol + H2O = glycerol + a fatty acid + H(+). The catalysed reaction is a diacylglycerol + H2O = a monoacylglycerol + a fatty acid + H(+). In terms of biological role, secreted lipase involved in Dandruff and seborrheic dermatitis (D/SD) probably via lipase-mediated breakdown of sebaceous lipids and release of irritating free fatty acids. Shows activity against monoglyceride and diglyceride substrates and generates free oleic acid from the substrates mono- and diolein. Able to cleave the oleic acid from both the 1 and the 2 position of the glycerol backbone as 1,2 isomers of diolein were converted into oleic acid and glycerol. Due to an absence of fatty acid synthase genes in Malassezia species, secretory lipases are essential for the yeast to generate free fatty acids from degradation of sebum and assimilate them as lipid sources for growth. Plays an essential role at the pathogen-host interface during disease progression. Also performs the reverse reaction to build diacylglycerols from monoacylglycerols. This is Secreted mono- and diacylglycerol lipase LIP2 from Malassezia restricta (Seborrheic dermatitis infection agent).